The following is a 634-amino-acid chain: Probable potassium transport system protein Kup 2 (634 aa).

Helical transmembrane passes span 20–40 (FWTLALGSIGVVYGDIGTSPL), 64–84 (VLSLMLWTLLIIVTLKYVLLI), 110–130 (FAAISLLGMAGAALFYGDAII), 148–168 (PGFDPYILPLSMAILVGLFLV), 174–194 (AAVATWFGPLMLIWFGLMAVA), 224–244 (AGLLALGAVFLTVTGAEALYA), 258–278 (WLVLVFPALALCYLGQGAMLL), 290–310 (LLFPDWALLPMVWIATGATII), 348–368 (IYIPRANWLLLIAVLYLVFAF), 377–397 (AYGIAVTGTMVLTSIMAFFVM), 405–425 (AAVATAIIVPFLIIDLIFLMA), and 430–450 (IVDGGWIPLMIGVGLMGVMVT).

Belongs to the HAK/KUP transporter (TC 2.A.72) family.

It localises to the cell inner membrane. It carries out the reaction K(+)(in) + H(+)(in) = K(+)(out) + H(+)(out). Transport of potassium into the cell. Likely operates as a K(+):H(+) symporter. The protein is Probable potassium transport system protein Kup 2 of Rhodopseudomonas palustris (strain ATCC BAA-98 / CGA009).